The primary structure comprises 1014 residues: Isoleucine--tRNA ligase (1014 aa).

Residues Pro-48 to His-58 carry the 'HIGH' region motif. Residues Lys-628 to Ser-632 carry the 'KMSKS' region motif. Lys-631 is an ATP binding site.

It belongs to the class-I aminoacyl-tRNA synthetase family. IleS type 2 subfamily. In terms of assembly, monomer. Zn(2+) is required as a cofactor.

It is found in the cytoplasm. The enzyme catalyses tRNA(Ile) + L-isoleucine + ATP = L-isoleucyl-tRNA(Ile) + AMP + diphosphate. Its function is as follows. Catalyzes the attachment of isoleucine to tRNA(Ile). As IleRS can inadvertently accommodate and process structurally similar amino acids such as valine, to avoid such errors it has two additional distinct tRNA(Ile)-dependent editing activities. One activity is designated as 'pretransfer' editing and involves the hydrolysis of activated Val-AMP. The other activity is designated 'posttransfer' editing and involves deacylation of mischarged Val-tRNA(Ile). In Dehalococcoides mccartyi (strain CBDB1), this protein is Isoleucine--tRNA ligase.